Reading from the N-terminus, the 258-residue chain is Type III pantothenate kinase (258 aa).

Position 6 to 13 (6 to 13) interacts with ATP; it reads DVGNTNTV. Substrate is bound by residues Y100 and 107–110; that span reads GADR. D109 serves as the catalytic Proton acceptor. D129 contributes to the K(+) binding site. T132 contacts ATP. A substrate-binding site is contributed by T184.

The protein belongs to the type III pantothenate kinase family. In terms of assembly, homodimer. The cofactor is NH4(+). Requires K(+) as cofactor.

The protein resides in the cytoplasm. It carries out the reaction (R)-pantothenate + ATP = (R)-4'-phosphopantothenate + ADP + H(+). The protein operates within cofactor biosynthesis; coenzyme A biosynthesis; CoA from (R)-pantothenate: step 1/5. In terms of biological role, catalyzes the phosphorylation of pantothenate (Pan), the first step in CoA biosynthesis. The chain is Type III pantothenate kinase from Geobacillus thermodenitrificans (strain NG80-2).